We begin with the raw amino-acid sequence, 711 residues long: Myb-like protein B (711 aa).

A compositionally biased stretch (low complexity) spans 24-50 (QPQQSIQQQQQQQQQQQQQQQQQQQQQ). 2 disordered regions span residues 24–70 (QPQQ…SPQL) and 113–235 (NYHT…IINN). 2 stretches are compositionally biased toward polar residues: residues 113 to 139 (NYHTITNSPPHQIHSPQLTIDQHSPPT) and 148 to 157 (TPLSSSTGFS). Low complexity-rich tracts occupy residues 158–187 (NNNNNNNNNNNNNNNSNSNNNINNNNNNNI) and 198–235 (NNYPNNNNNNNNNNNNNNNNNNNNNNNNNNNNNNIINN). HTH myb-type domains follow at residues 428 to 490 (RESI…SPEI) and 491 to 542 (KKGS…SRQT). 2 DNA-binding regions (H-T-H motif) span residues 462–486 (WKKIATKLGGGKTGAQCAQHWKRVL) and 514–538 (WKNVAIEIKTRTDIQCRYQYFKAIM). In terms of domain architecture, Myb-like spans 540–598 (RQTEWNQLEDDILTKKIKLMTQNNEKISFQQVSKHLARAKTTKIPRTALECKSRWSQLN). A disordered region spans residues 598 to 640 (NSTNVNNNNNNNNNSITTSSSNTNQQQQSTMVTPTSSPLSSPI).

The protein resides in the nucleus. Transcriptional activator that initiates multicellular development by induction of adenylyl cyclase expression. This Dictyostelium discoideum (Social amoeba) protein is Myb-like protein B (mybB).